Here is a 393-residue protein sequence, read N- to C-terminus: Putative F-box protein At1g55070 (393 aa).

The region spanning 29 to 74 (GEYFDRIPADLVIKILSKLSAKSMAKCRCVCKLLSSIIRQPNYNQL) is the F-box domain.

This Arabidopsis thaliana (Mouse-ear cress) protein is Putative F-box protein At1g55070.